A 392-amino-acid polypeptide reads, in one-letter code: GDSL esterase/lipase ESM1 (392 aa).

The signal sequence occupies residues 1-28 (MADNLNLVSVLGVLLVLTIFHNPIIVYA). The active-site Nucleophile is the Ser43. 3 N-linked (GlcNAc...) asparagine glycosylation sites follow: Asn146, Asn166, and Asn290. Residues Asp324 and His327 contribute to the active site.

It belongs to the 'GDSL' lipolytic enzyme family.

It localises to the secreted. In terms of biological role, represses or inhibits nitriles production from methionine-derived and from indol-3-ylmethyl glucosinolates. Favors isothiocyanate production. The polypeptide is GDSL esterase/lipase ESM1 (ESM1) (Arabidopsis thaliana (Mouse-ear cress)).